Reading from the N-terminus, the 461-residue chain is Photosystem II CP43 reaction center protein (461 aa).

Residues 1–2 (ME) constitute a propeptide that is removed on maturation. The residue at position 3 (Thr-3) is an N-acetylthreonine. Residue Thr-3 is modified to Phosphothreonine. The next 5 membrane-spanning stretches (helical) occupy residues 57 to 81 (LFEV…PHLA), 122 to 143 (LLGP…KDRN), 166 to 188 (KALY…RKIT), 243 to 263 (KPFA…LSYS), and 279 to 300 (WFNN…ASQA). Residue Glu-355 participates in [CaMn4O5] cluster binding. Residues 435–459 (RARAAAAGFEKGIDRDLEPVLSMTP) form a helical membrane-spanning segment.

It belongs to the PsbB/PsbC family. PsbC subfamily. PSII is composed of 1 copy each of membrane proteins PsbA, PsbB, PsbC, PsbD, PsbE, PsbF, PsbH, PsbI, PsbJ, PsbK, PsbL, PsbM, PsbT, PsbX, PsbY, PsbZ, Psb30/Ycf12, at least 3 peripheral proteins of the oxygen-evolving complex and a large number of cofactors. It forms dimeric complexes. Binds multiple chlorophylls and provides some of the ligands for the Ca-4Mn-5O cluster of the oxygen-evolving complex. It may also provide a ligand for a Cl- that is required for oxygen evolution. PSII binds additional chlorophylls, carotenoids and specific lipids. serves as cofactor.

The protein localises to the plastid. Its subcellular location is the chloroplast thylakoid membrane. Functionally, one of the components of the core complex of photosystem II (PSII). It binds chlorophyll and helps catalyze the primary light-induced photochemical processes of PSII. PSII is a light-driven water:plastoquinone oxidoreductase, using light energy to abstract electrons from H(2)O, generating O(2) and a proton gradient subsequently used for ATP formation. The chain is Photosystem II CP43 reaction center protein from Ceratophyllum demersum (Rigid hornwort).